The following is a 215-amino-acid chain: Glycerol-3-phosphate acyltransferase (215 aa).

A run of 6 helical transmembrane segments spans residues 3–23, 42–61, 68–90, 110–130, 134–154, and 162–182; these read LILLILTAYLLGSIPTGLWIG, TNTFRILGLKAGAATLLIDI, TLLPVLVGASNVSPIAIGFFAVL, AGVLLGFAPLYLLFLAAVFVL, LFSMISLASLTASVVAVISVL, and LLPGYDWLLTITIVVLAAIII.

It belongs to the PlsY family. As to quaternary structure, probably interacts with PlsX.

Its subcellular location is the cell membrane. It carries out the reaction an acyl phosphate + sn-glycerol 3-phosphate = a 1-acyl-sn-glycero-3-phosphate + phosphate. Its pathway is lipid metabolism; phospholipid metabolism. Its function is as follows. Catalyzes the transfer of an acyl group from acyl-phosphate (acyl-PO(4)) to glycerol-3-phosphate (G3P) to form lysophosphatidic acid (LPA). This enzyme utilizes acyl-phosphate as fatty acyl donor, but not acyl-CoA or acyl-ACP. This Streptococcus equi subsp. zooepidemicus (strain MGCS10565) protein is Glycerol-3-phosphate acyltransferase.